The chain runs to 385 residues: Probable dual-specificity RNA methyltransferase RlmN (385 aa).

Residues 1 to 35 form a disordered region; the sequence is MNVKEPAEEAAIQLRTERQRIEPEGEEQSEQPTDL. Glutamate 121 (proton acceptor) is an active-site residue. The region spanning 132–367 is the Radical SAM core domain; that stretch reads TRDRVTVCLS…AVIREERGQD (236 aa). A disulfide bridge links cysteine 139 with cysteine 372. Residues cysteine 146, cysteine 150, and cysteine 153 each contribute to the [4Fe-4S] cluster site. Residues 198–199, serine 230, 253–255, and asparagine 329 each bind S-adenosyl-L-methionine; these read GE and SLH. Cysteine 372 (S-methylcysteine intermediate) is an active-site residue.

This sequence belongs to the radical SAM superfamily. RlmN family. [4Fe-4S] cluster is required as a cofactor.

It is found in the cytoplasm. It carries out the reaction adenosine(2503) in 23S rRNA + 2 reduced [2Fe-2S]-[ferredoxin] + 2 S-adenosyl-L-methionine = 2-methyladenosine(2503) in 23S rRNA + 5'-deoxyadenosine + L-methionine + 2 oxidized [2Fe-2S]-[ferredoxin] + S-adenosyl-L-homocysteine. The catalysed reaction is adenosine(37) in tRNA + 2 reduced [2Fe-2S]-[ferredoxin] + 2 S-adenosyl-L-methionine = 2-methyladenosine(37) in tRNA + 5'-deoxyadenosine + L-methionine + 2 oxidized [2Fe-2S]-[ferredoxin] + S-adenosyl-L-homocysteine. Its function is as follows. Specifically methylates position 2 of adenine 2503 in 23S rRNA and position 2 of adenine 37 in tRNAs. This chain is Probable dual-specificity RNA methyltransferase RlmN, found in Heliobacterium modesticaldum (strain ATCC 51547 / Ice1).